The sequence spans 1567 residues: Putative DEAH-box ATP-dependent helicase UM11114 (1567 aa).

Disordered stretches follow at residues 1–95 and 670–734; these read MAPR…PGSK and ESSV…ETRR. Positions 10–20 are enriched in polar residues; sequence IKSSGTTSSKA. Low complexity-rich tracts occupy residues 39-48 and 55-73; these read TKAAKQQQTQ and AISA…AASS. Over residues 74 to 83 the composition is skewed to gly residues; sequence AGGGGGGGQG. Polar residues-rich tracts occupy residues 670-687 and 713-726; these read ESSV…TPTG and LQRQ…SPSY. The 179-residue stretch at 746-924 folds into the Helicase ATP-binding domain; that stretch reads LGLIRSNRVV…FGKAPCISIP (179 aa). 759–766 contacts ATP; the sequence is GETGCGKT. The DEAH box signature appears at 871 to 874; the sequence is DEVH. The Helicase C-terminal domain occupies 1003–1184; it reads VVRYVVERAE…SLFLEVKSMR (182 aa).

The protein belongs to the DEAD box helicase family. DEAH subfamily.

This chain is Putative DEAH-box ATP-dependent helicase UM11114, found in Mycosarcoma maydis (Corn smut fungus).